The chain runs to 277 residues: Large ribosomal subunit protein uL2 (277 aa).

Disordered regions lie at residues 35–60 (EKQS…GHKQ) and 225–277 (MNPV…ANKR). Polar residues predominate over residues 43–53 (RNNNGHITTRH).

Belongs to the universal ribosomal protein uL2 family. As to quaternary structure, part of the 50S ribosomal subunit. Forms a bridge to the 30S subunit in the 70S ribosome.

Its function is as follows. One of the primary rRNA binding proteins. Required for association of the 30S and 50S subunits to form the 70S ribosome, for tRNA binding and peptide bond formation. It has been suggested to have peptidyltransferase activity; this is somewhat controversial. Makes several contacts with the 16S rRNA in the 70S ribosome. In Methylobacillus flagellatus (strain ATCC 51484 / DSM 6875 / VKM B-1610 / KT), this protein is Large ribosomal subunit protein uL2.